A 180-amino-acid polypeptide reads, in one-letter code: Peptide deformylase (180 aa).

Residues cysteine 88 and histidine 130 each contribute to the Fe cation site. Glutamate 131 is a catalytic residue. Histidine 134 provides a ligand contact to Fe cation.

This sequence belongs to the polypeptide deformylase family. The cofactor is Fe(2+).

It carries out the reaction N-terminal N-formyl-L-methionyl-[peptide] + H2O = N-terminal L-methionyl-[peptide] + formate. Functionally, removes the formyl group from the N-terminal Met of newly synthesized proteins. Requires at least a dipeptide for an efficient rate of reaction. N-terminal L-methionine is a prerequisite for activity but the enzyme has broad specificity at other positions. In Acidothermus cellulolyticus (strain ATCC 43068 / DSM 8971 / 11B), this protein is Peptide deformylase.